Here is a 303-residue protein sequence, read N- to C-terminus: Aquaporin-7 (303 aa).

The Cytoplasmic portion of the chain corresponds to 1 to 21 (MAPRSVLETIQSVLQKNMVRE). The residue at position 5 (Ser5) is a Phosphoserine. Residues 22-39 (FLAEFLSTYVMMVFGLGS) form a helical membrane-spanning segment. Topologically, residues 40-52 (VAHMVLGENSGSY) are extracellular. Residues 53 to 70 (LGVNLGFGFGVTMGVHVA) form a helical membrane-spanning segment. Residues 71–74 (GGIS) lie on the Cytoplasmic side of the membrane. Positions 75 to 88 (GAHMNAAVTFTNCA) form an intramembrane region, discontinuously helical. Residues 79 to 81 (NAA) carry the NPA 1 motif. The Cytoplasmic portion of the chain corresponds to 89–96 (LGRMTWKK). The helical transmembrane segment at 97–117 (FPVYVLGQFLGSFSAAATTYL) threads the bilayer. Over 118–152 (IFYGAINHFAGGDLLVTGSKATANIFATYLPEYMT) the chain is Extracellular. A helical transmembrane segment spans residues 153–173 (LWRGFLDEAFVTGMLQLCLFA). Residues 174–185 (ITDKKNSPALQG) lie on the Cytoplasmic side of the membrane. The helical transmembrane segment at 186 to 202 (TEPLVIGILVTVLGVSL) threads the bilayer. Residues 203–206 (GMNS) lie on the Extracellular side of the membrane. Residues 207-220 (GYAINPSRDLPPRL) constitute an intramembrane region (discontinuously helical). The NPA 2 signature appears at 211–213 (NPS). The Extracellular segment spans residues 221–238 (FTFIAGWGKQVFRAGNNW). Residues 239–260 (WWVPVVAPLLGAYLGGIVYLGL) traverse the membrane as a helical segment. The Cytoplasmic portion of the chain corresponds to 261-303 (IHPSIPQDPQRLENFTARDQKVTASYKNAASANISGSVPLEHF).

The protein belongs to the MIP/aquaporin (TC 1.A.8) family. Homotetramer; each monomer provides an independent glycerol/water pore. Two homotetramers on opposing membranes can dimerize, forming a cell-cell junction. Interacts with PLIN1. Phosphorylation by PKA could prevent the interaction with PLIN1. As to expression, detected in proximal tubules in kidney. Detected in the capillary network between muscle fibers in skeletal muscle and heart, and in spermatids and on spermatozoa tails in testis and epididymis. Detected in white and brown adipose tissue, especially on small blood vessels (at protein level). Detected in kidney and white adipose tissue.

Its subcellular location is the cell membrane. The protein localises to the cytoplasmic vesicle membrane. It localises to the lipid droplet. It carries out the reaction glycerol(in) = glycerol(out). It catalyses the reaction H2O(in) = H2O(out). The catalysed reaction is urea(in) = urea(out). With respect to regulation, glycerol transport is regulated by pH, with the porin being permeable to glycerol at pH 7.4 but not at pH 5.5. Water permeability, however, is not influenced by pH. In terms of biological role, aquaglyceroporins form homotetrameric transmembrane channels, with each monomer independently mediating glycerol and water transport across the plasma membrane along their osmotic gradient. Could also be permeable to urea. Mediates the efflux of glycerol, formed upon triglyceride hydrolysis, to avoid its accumulation in adipocytes and to make it available to other tissues. In the kidney, mediates the reabsorption of glycerol, preventing its loss in urine, again participating to energy homeostasis. In pancreatic beta cells, it also mediates the efflux of glycerol, regulating its intracellular levels. In Mus musculus (Mouse), this protein is Aquaporin-7.